Consider the following 330-residue polypeptide: ADP-L-glycero-D-manno-heptose-6-epimerase (330 aa).

Residues phenylalanine 11–isoleucine 12, aspartate 32–asparagine 33, lysine 39, lysine 54, glutamate 75–serine 79, and asparagine 92 contribute to the NADP(+) site. Tyrosine 139 (proton acceptor) is an active-site residue. Residue lysine 143 participates in NADP(+) binding. Residue asparagine 168 coordinates substrate. 2 residues coordinate NADP(+): valine 169 and lysine 177. Catalysis depends on lysine 177, which acts as the Proton acceptor. Residues arginine 179, histidine 186, phenylalanine 200–tyrosine 203, arginine 213, and tyrosine 292 each bind substrate.

Belongs to the NAD(P)-dependent epimerase/dehydratase family. HldD subfamily. In terms of assembly, homopentamer. Requires NADP(+) as cofactor.

The catalysed reaction is ADP-D-glycero-beta-D-manno-heptose = ADP-L-glycero-beta-D-manno-heptose. It functions in the pathway nucleotide-sugar biosynthesis; ADP-L-glycero-beta-D-manno-heptose biosynthesis; ADP-L-glycero-beta-D-manno-heptose from D-glycero-beta-D-manno-heptose 7-phosphate: step 4/4. Functionally, catalyzes the interconversion between ADP-D-glycero-beta-D-manno-heptose and ADP-L-glycero-beta-D-manno-heptose via an epimerization at carbon 6 of the heptose. This chain is ADP-L-glycero-D-manno-heptose-6-epimerase, found in Burkholderia ambifaria (strain ATCC BAA-244 / DSM 16087 / CCUG 44356 / LMG 19182 / AMMD) (Burkholderia cepacia (strain AMMD)).